The following is a 409-amino-acid chain: Arginine deiminase (409 aa).

Cys397 functions as the Amidino-cysteine intermediate in the catalytic mechanism.

This sequence belongs to the arginine deiminase family.

It localises to the cytoplasm. The catalysed reaction is L-arginine + H2O = L-citrulline + NH4(+). Its pathway is amino-acid degradation; L-arginine degradation via ADI pathway; carbamoyl phosphate from L-arginine: step 1/2. This chain is Arginine deiminase (arcA), found in Metamycoplasma hominis (Mycoplasma hominis).